Consider the following 388-residue polypeptide: Chitinase 4 (388 aa).

The region spanning 22–375 (FKTCVYFSNW…KNFVDQLGGV (354 aa)) is the GH18 domain. N-linked (GlcNAc...) asparagine glycosylation is found at Asn-30 and Asn-82. Chitin is bound by residues 82 to 83 (NQ) and 109 to 112 (GGWG). N-linked (GlcNAc...) asparagine glycans are attached at residues Asn-123 and Asn-132. Glu-151 acts as the Proton donor in catalysis. Residue Tyr-152 coordinates chitin. A glycan (N-linked (GlcNAc...) asparagine) is linked at Asn-155. 208–211 (MCYD) contacts chitin. Asn-237 carries N-linked (GlcNAc...) asparagine glycosylation. Trp-350 contributes to the chitin binding site.

The protein belongs to the glycosyl hydrolase 18 family. Chitinase class V subfamily.

It is found in the secreted. The enzyme catalyses Random endo-hydrolysis of N-acetyl-beta-D-glucosaminide (1-&gt;4)-beta-linkages in chitin and chitodextrins.. Its function is as follows. Chitinase involved in the remodeling of chitin in the fungal cell wall. Plays a role in sporulation. The sequence is that of Chitinase 4 (CHT4) from Candida albicans (strain SC5314 / ATCC MYA-2876) (Yeast).